The following is a 178-amino-acid chain: CDP-archaeol synthase (178 aa).

Helical transmembrane passes span 3 to 23 (LLLL…ANAV), 56 to 76 (FFGI…VILY), 91 to 111 (IILG…GSFI), 123 to 143 (APLL…YPLY), and 149 to 169 (LMVI…IIAY).

This sequence belongs to the CDP-archaeol synthase family. Requires Mg(2+) as cofactor.

It is found in the cell membrane. The enzyme catalyses 2,3-bis-O-(geranylgeranyl)-sn-glycerol 1-phosphate + CTP + H(+) = CDP-2,3-bis-O-(geranylgeranyl)-sn-glycerol + diphosphate. It functions in the pathway membrane lipid metabolism; glycerophospholipid metabolism. Functionally, catalyzes the formation of CDP-2,3-bis-(O-geranylgeranyl)-sn-glycerol (CDP-archaeol) from 2,3-bis-(O-geranylgeranyl)-sn-glycerol 1-phosphate (DGGGP) and CTP. This reaction is the third ether-bond-formation step in the biosynthesis of archaeal membrane lipids. The chain is CDP-archaeol synthase from Methanococcus maripaludis (strain C7 / ATCC BAA-1331).